A 309-amino-acid polypeptide reads, in one-letter code: MRHFLTLKDFTKEEILEMIELARSIKAQTKRREFVPYMENKTLAMIFEKSSTRTRVSFEVGIYQLGGIGLFLSKNDIQLGRGEPMKDTARVVSRICDMVMIRTYEQSKLEEFAAFSQVPVINGLTNEYHPVQLMADYLTMIEYGKADSPVVAYVGDGNNMTHSWLMLASKLGFTLRIATPKGYEPDPNIVEDAMRFAKESGATIELMHDPKAAVQDADVVTTDTWISMGQEEEKEKRIKDFKGFQVDTILMSLAKKDAIFLHCLPAYRGYEVSEEVFEAHAEEIFDEAENRLHAQKGIMVWLDRKRGES.

Carbamoyl phosphate-binding positions include 51–54, Gln-78, Arg-102, and 129–132; these read STRT and HPVQ. Residues Asn-159, Asp-223, and 227-228 each bind L-ornithine; that span reads SM. Carbamoyl phosphate-binding positions include 263–264 and Arg-291; that span reads CL.

The protein belongs to the aspartate/ornithine carbamoyltransferase superfamily. OTCase family.

It is found in the cytoplasm. The catalysed reaction is carbamoyl phosphate + L-ornithine = L-citrulline + phosphate + H(+). Its pathway is amino-acid biosynthesis; L-arginine biosynthesis; L-arginine from L-ornithine and carbamoyl phosphate: step 1/3. Functionally, reversibly catalyzes the transfer of the carbamoyl group from carbamoyl phosphate (CP) to the N(epsilon) atom of ornithine (ORN) to produce L-citrulline. The protein is Ornithine carbamoyltransferase of Nitratiruptor sp. (strain SB155-2).